The primary structure comprises 181 residues: uncharacterized protein (181 aa).

The first 23 residues, 1–23 (MKKCLLFLTTIALILSLSTNAFA), serve as a signal peptide directing secretion.

This is an uncharacterized protein from Bacillus subtilis (strain 168).